We begin with the raw amino-acid sequence, 452 residues long: Bifunctional protein GlmU (452 aa).

The pyrophosphorylase stretch occupies residues 1 to 226 (MSLHIIILAA…LHEVEGVNNR (226 aa)). UDP-N-acetyl-alpha-D-glucosamine contacts are provided by residues 8–11 (LAAG), Lys-22, Gln-73, 78–79 (GT), 100–102 (YGD), Gly-136, Glu-151, Asn-166, and Asn-224. Residue Asp-102 participates in Mg(2+) binding. Mg(2+) is bound at residue Asn-224. Residues 227-247 (IQLAALERAYQQQVAEELMLA) are linker. The interval 248–452 (GATLRDPARV…IDGWTRPVKK (205 aa)) is N-acetyltransferase. Positions 330 and 348 each coordinate UDP-N-acetyl-alpha-D-glucosamine. The active-site Proton acceptor is the His-360. The UDP-N-acetyl-alpha-D-glucosamine site is built by Tyr-363 and Asn-374. Acetyl-CoA-binding positions include Ala-377, 383 to 384 (NY), Ser-402, Ala-420, and Arg-437.

In the N-terminal section; belongs to the N-acetylglucosamine-1-phosphate uridyltransferase family. The protein in the C-terminal section; belongs to the transferase hexapeptide repeat family. As to quaternary structure, homotrimer. Requires Mg(2+) as cofactor.

Its subcellular location is the cytoplasm. It catalyses the reaction alpha-D-glucosamine 1-phosphate + acetyl-CoA = N-acetyl-alpha-D-glucosamine 1-phosphate + CoA + H(+). The catalysed reaction is N-acetyl-alpha-D-glucosamine 1-phosphate + UTP + H(+) = UDP-N-acetyl-alpha-D-glucosamine + diphosphate. The protein operates within nucleotide-sugar biosynthesis; UDP-N-acetyl-alpha-D-glucosamine biosynthesis; N-acetyl-alpha-D-glucosamine 1-phosphate from alpha-D-glucosamine 6-phosphate (route II): step 2/2. It functions in the pathway nucleotide-sugar biosynthesis; UDP-N-acetyl-alpha-D-glucosamine biosynthesis; UDP-N-acetyl-alpha-D-glucosamine from N-acetyl-alpha-D-glucosamine 1-phosphate: step 1/1. Its pathway is bacterial outer membrane biogenesis; LPS lipid A biosynthesis. In terms of biological role, catalyzes the last two sequential reactions in the de novo biosynthetic pathway for UDP-N-acetylglucosamine (UDP-GlcNAc). The C-terminal domain catalyzes the transfer of acetyl group from acetyl coenzyme A to glucosamine-1-phosphate (GlcN-1-P) to produce N-acetylglucosamine-1-phosphate (GlcNAc-1-P), which is converted into UDP-GlcNAc by the transfer of uridine 5-monophosphate (from uridine 5-triphosphate), a reaction catalyzed by the N-terminal domain. In Hahella chejuensis (strain KCTC 2396), this protein is Bifunctional protein GlmU.